Reading from the N-terminus, the 25-residue chain is Aurein-5.1 (25 aa).

Belongs to the frog skin active peptide (FSAP) family. Aurein subfamily. In terms of tissue distribution, expressed by the skin dorsal glands.

It is found in the secreted. Has no antimicrobial or anticancer activity. The chain is Aurein-5.1 from Ranoidea aurea (Green and golden bell frog).